The following is a 662-amino-acid chain: MSENKFLPICKDDMIERGWEQCDFVLVTADAYIDHHSFGTAIISRVLENAGYKVGIIAQPDWKSVDDFKKLGRPRLGFLVNGGNMDPMVNHYTVSKKLRKKDLYTPKGEMGKRPDRATIVYCNKIREAYKDVNIVIGGIEASLRRFAHYDYWENKVRKSILVDSGADLLVYGMSEKQIVEVADFLNQGFDGKYIRHIPGTCYIADSLDEIYEEHIVLPSFKEVSSDKRTYAECFKIQYDEQDPVRGRTLVQEHNGKYVVINKPEMPLSREELDRVYALPYQKTYHPIYEKDGGIAAIEEVKFSLVSSRGCSGNCSFCAITFHQGRIVTSRSEDSIVEEAEEITKYDDFKGYIHDIGGPTANFRKPACKKQLTLGACKHKRCMSPGICKNMEVDHREYLHLLRRVRKLPGIKKVFIRSGLRYDYIMADKDDTFFKELVEHHVSGQLKVAPEHVSPNVLKYMGKPAGKTYDEFRRKFFRITERLGKKQFIIPYLMSSHPGCKLEDAIMLAEYLRDINYQPEQVQDFYPTPGTLSTTMFYTGLDPLTMEEVYIPRSKEEKAMQRALLQFKNPKNYNIVYDALVKAGREDLIGNGPKCLIRDKNSFGKGNNHSNHKSGGRKNRNENSGRRESEDKKRSSHSKKQRGNKSRGFDQKSQRGSKGKKRR.

The region spanning 296 to 567 is the Radical SAM core domain; the sequence is AIEEVKFSLV…AMQRALLQFK (272 aa). Residues cysteine 310, cysteine 314, and cysteine 317 each contribute to the [4Fe-4S] cluster site. The disordered stretch occupies residues 597–662; that stretch reads RDKNSFGKGN…QRGSKGKKRR (66 aa). Basic and acidic residues predominate over residues 618 to 632; sequence NRNENSGRRESEDKK. A compositionally biased stretch (basic residues) spans 633–644; it reads RSSHSKKQRGNK.

The protein belongs to the UPF0313 family. The cofactor is [4Fe-4S] cluster.

This Clostridium perfringens (strain 13 / Type A) protein is UPF0313 protein CPE1196.